The primary structure comprises 2135 residues: Nonribosomal peptide synthetase gliP (2135 aa).

Positions threonine 34–arginine 424 are adenylation 1. Positions threonine 519 to alanine 594 constitute a Carrier 1 domain. Serine 555 bears the O-(pantetheine 4'-phosphoryl)serine mark. The interval alanine 663 to isoleucine 913 is condensation 1. Residues tyrosine 1078–alanine 1458 are adenylation 2. The Carrier 2 domain maps to alanine 1544–arginine 1622. Residue serine 1582 is modified to O-(pantetheine 4'-phosphoryl)serine. Residues serine 1642–lysine 1905 are condensation 2. The 74-residue stretch at arginine 2061–valine 2134 folds into the Carrier 3 domain. O-(pantetheine 4'-phosphoryl)serine is present on serine 2095.

The protein belongs to the NRP synthetase family.

Its pathway is mycotoxin biosynthesis. Functionally, nonribosomal peptide synthetase; part of the gene cluster that mediates the biosynthesis of gliotoxin, a member of the epipolythiodioxopiperazine (ETP) class of toxins characterized by a disulfide-bridged cyclic dipeptide. The first step in gliotoxin biosynthesis is the condensation of serine and phenylalanine to form the cyclo-L-phenylalanyl-L-serine diketopiperazine (DKP) by the NRPS gliP. GliP is also able to produce the DKP cyclo-L-tryptophanyl-L-serine, suggesting that the substrate specificity of the first adenylation (A) domain in gliP is sufficiently relaxed to accommodate both L-Phe and L-Trp. The cytochrome P450 monooxygenase gliC has been shown to catalyze the subsequent hydroxylation of the alpha-carbon of L-Phe in cyclo-L-phenylalanyl-L-serine whereas the second cytochrome P450 enzyme, gliF, is presumably involved in the modification of the DKP side chain. The glutathione S-transferase (GST) gliG then forms a bis-glutathionylated biosynthetic intermediate which is responsible for the sulfurization of gliotoxin. This bis-glutathionylated intermediate is subsequently processed by the gamma-glutamyl cyclotransferase gliK to remove both gamma-glutamyl moieties. Subsequent processing via gliI yields a biosynthetic intermediate, which is N-methylated via the N-methyltransferase gliN, before the gliotoxin oxidoreductase gliT-mediated disulfide bridge closure. GliN-mediated amide methylation confers stability to ETP, damping the spontaneous formation of tri- and tetrasulfides. Intracellular dithiol gliotoxin oxidized by gliT is subsequently effluxed by gliA. Gliotoxin contributes to pathogenesis during invasive aspergillosis. In macrophages and neutrophils, gliotoxin showed inhibition of various different cell functions including cytokine production, antigen presentation, phagocytosis, and production of reactive oxygen species. This chain is Nonribosomal peptide synthetase gliP, found in Aspergillus fumigatus (strain ATCC MYA-4609 / CBS 101355 / FGSC A1100 / Af293) (Neosartorya fumigata).